The chain runs to 1269 residues: Protein strawberry notch homolog 1 (1269 aa).

Residues 21–47 (NDLFDVDGGDAGLATPTPPSVQQQQPP) are disordered. The residue at position 113 (Lys-113) is an N6-acetyllysine. Phosphoserine occurs at positions 126 and 178. An N6-acetyllysine modification is found at Lys-377. The disordered stretch occupies residues 652–725 (PSNNSSPRDS…SLITSQDAVE (74 aa)). A phosphoserine mark is found at Ser-656, Ser-657, and Ser-661. Residues 679 to 693 (SGSESDVSDNEESDY) show a composition bias toward acidic residues. Phosphoserine is present on residues Ser-700 and Ser-701. A coiled-coil region spans residues 719–746 (TSQDAVERAQQMKKDLLDKLEKLAEDLP). The residue at position 1098 (Lys-1098) is an N6-acetyllysine. Position 1262 is a phosphoserine (Ser-1262).

It belongs to the SBNO family.

The protein localises to the nucleus. Plays a crucial role in the regulation of neural stem cells (NSCs) proliferation. Enhances the phosphorylation of GSK3B through the PI3K-Akt signaling pathway, thereby upregulating the Wnt/beta-catenin signaling pathway and promoting the proliferation of NSCs. Improves ischemic stroke recovery while inhibiting neuroinflammation through small extracellular vesicles (sEVs)-mediated mechanism. Enhances the secretion of sEVs from NSCs, which in turn inhibit both the MAPK and NF-kappaB pathways in microglia. This inhibition suppresses the pro-inflammatory M1 polarization of microglia, promoting a shift towards the M2 anti-inflammatory phenotype, which is beneficial for reducing neuroinflammation. In Rattus norvegicus (Rat), this protein is Protein strawberry notch homolog 1 (Sbno1).